A 313-amino-acid polypeptide reads, in one-letter code: Glutathione synthetase (313 aa).

Residues 125–309 enclose the ATP-grasp domain; that stretch reads KLFVMDFTEL…IAAKIWDVIE (185 aa). 151-207 is a binding site for ATP; that stretch reads RAEHGAVVMKPLHGHGGAAVFRVLPQDINFGSLYDMFAVTFREPWVIQRFLPEVKHG. 2 residues coordinate Mg(2+): Glu280 and Asn282.

This sequence belongs to the prokaryotic GSH synthase family. It depends on Mg(2+) as a cofactor. The cofactor is Mn(2+).

The enzyme catalyses gamma-L-glutamyl-L-cysteine + glycine + ATP = glutathione + ADP + phosphate + H(+). Its pathway is sulfur metabolism; glutathione biosynthesis; glutathione from L-cysteine and L-glutamate: step 2/2. This is Glutathione synthetase from Rhodopseudomonas palustris (strain ATCC BAA-98 / CGA009).